The sequence spans 407 residues: O-antigen polymerase (407 aa).

11 consecutive transmembrane segments (helical) span residues 2 to 22 (LIISYIALCLLFIVYLYTLSV), 31 to 51 (VMVPYLIITVPTLYVFEGIFV), 63 to 83 (YLFFYTCYITYIASFVISYLY), 101 to 121 (YVFTSLLFTFLAFIIYLPVLM), 141 to 161 (YGIYFYPSLMFSLVASICAFF), 168 to 185 (LFCISIVLFNCILIFLHG), 190 to 204 (IFSIFIAFILYLSYI), 211 to 231 (FMFLVKSFAVIAVIVTAFFAY), 319 to 339 (ADFGLFTPVWLVISGVFKGVL), 356 to 376 (FIMFLFCIGISVIPVSMGWLF), and 382 to 402 (IAFMVYIASSFVFSEHIRFVL).

It localises to the cell inner membrane. The enzyme catalyses n lipid-linked O-antigen repeat units = a lipid-linked O antigen + (n-1) polyisoprenyl diphosphate.. It participates in bacterial outer membrane biogenesis; LPS O-antigen biosynthesis. Polymerase involved in the biosynthesis of the lipopolysaccharide (LPS). Catalyzes the polymerization of the O-antigen repeat units on the periplasmic face of the inner membrane, leading to the formation of the lipid-linked O-antigen molecule. The sequence is that of O-antigen polymerase (rfc) from Salmonella typhi.